The primary structure comprises 132 residues: Cytidine deaminase (132 aa).

Positions 1 to 128 (MDRQMLIKEA…ELLPGAFTAE (128 aa)) constitute a CMP/dCMP-type deaminase domain. Position 42-44 (42-44 (NIE)) interacts with substrate. A Zn(2+)-binding site is contributed by cysteine 53. Glutamate 55 (proton donor) is an active-site residue. Zn(2+) is bound by residues cysteine 86 and cysteine 89.

The protein belongs to the cytidine and deoxycytidylate deaminase family. Zn(2+) is required as a cofactor.

It carries out the reaction cytidine + H2O + H(+) = uridine + NH4(+). It catalyses the reaction 2'-deoxycytidine + H2O + H(+) = 2'-deoxyuridine + NH4(+). This enzyme scavenges exogenous and endogenous cytidine and 2'-deoxycytidine for UMP synthesis. The chain is Cytidine deaminase (cdd) from Halalkalibacterium halodurans (strain ATCC BAA-125 / DSM 18197 / FERM 7344 / JCM 9153 / C-125) (Bacillus halodurans).